A 468-amino-acid chain; its full sequence is ATP synthase subunit beta (468 aa).

155–162 (GGAGVGKT) contributes to the ATP binding site.

This sequence belongs to the ATPase alpha/beta chains family. As to quaternary structure, F-type ATPases have 2 components, CF(1) - the catalytic core - and CF(0) - the membrane proton channel. CF(1) has five subunits: alpha(3), beta(3), gamma(1), delta(1), epsilon(1). CF(0) has three main subunits: a(1), b(2) and c(9-12). The alpha and beta chains form an alternating ring which encloses part of the gamma chain. CF(1) is attached to CF(0) by a central stalk formed by the gamma and epsilon chains, while a peripheral stalk is formed by the delta and b chains.

The protein resides in the cell inner membrane. It carries out the reaction ATP + H2O + 4 H(+)(in) = ADP + phosphate + 5 H(+)(out). Its function is as follows. Produces ATP from ADP in the presence of a proton gradient across the membrane. The catalytic sites are hosted primarily by the beta subunits. This Leptospira biflexa serovar Patoc (strain Patoc 1 / ATCC 23582 / Paris) protein is ATP synthase subunit beta.